Reading from the N-terminus, the 392-residue chain is ATP phosphoribosyltransferase regulatory subunit (392 aa).

The protein belongs to the class-II aminoacyl-tRNA synthetase family. HisZ subfamily. Heteromultimer composed of HisG and HisZ subunits.

Its subcellular location is the cytoplasm. Its pathway is amino-acid biosynthesis; L-histidine biosynthesis; L-histidine from 5-phospho-alpha-D-ribose 1-diphosphate: step 1/9. In terms of biological role, required for the first step of histidine biosynthesis. May allow the feedback regulation of ATP phosphoribosyltransferase activity by histidine. This is ATP phosphoribosyltransferase regulatory subunit from Marinomonas sp. (strain MWYL1).